The primary structure comprises 266 residues: MPHMEDNGSEKEQLFLQHIQNLPQERLDAIRGHPELVLKEIDEFTYPDGSGVRMCIGDVKGGFIVGKIRERKPKIMVELGGYLGYSAILFGNEISKIPGGRYYSLEVNEDYAKIAYELVKLAGLDEIVTIMIGKACDSLVELQQKLLHKDLGFQALDMVFIDHWKDLYVPDLRVIESLNMIAPGTLLVADNIITPGAPEYHKYVNMSPEERRGYQAKVRNVNGFDFIGRWDLIYKTETKEFEGVIRNKHRKDAVDVTECVGYAKKD.

S-adenosyl-L-methionine-binding residues include I56, E78, S86, E106, V107, A135, and D162. A Mg(2+)-binding site is contributed by D162. K165 provides a ligand contact to substrate. D190 and N191 together coordinate Mg(2+). Residue N191 coordinates substrate.

The protein belongs to the class I-like SAM-binding methyltransferase superfamily. Cation-dependent O-methyltransferase family. It depends on Mg(2+) as a cofactor.

It is found in the cytoplasm. The protein localises to the nucleus. It carries out the reaction a catechol + S-adenosyl-L-methionine = a guaiacol + S-adenosyl-L-homocysteine + H(+). In Schizosaccharomyces pombe (strain 972 / ATCC 24843) (Fission yeast), this protein is Probable catechol O-methyltransferase 1.